The sequence spans 70 residues: Conotoxin Pl171 (70 aa).

The signal sequence occupies residues 1–21 (MGMRMMFTMILLVVLVTTVVS). 2 disulfide bridges follow: C54-C61 and C55-C67. F69 is modified (phenylalanine amide).

The protein belongs to the conotoxin A superfamily. As to expression, expressed by the venom duct.

The protein resides in the secreted. Functionally, probable neurotoxin with unknown target. Possibly targets ion channels. The polypeptide is Conotoxin Pl171 (Conus planorbis (Planorbis cone)).